We begin with the raw amino-acid sequence, 382 residues long: tRNA (guanine(26)-N(2))-dimethyltransferase (382 aa).

The Trm1 methyltransferase domain occupies 4–370 (TEVIEGKARL…REFSEILECV (367 aa)). Residues Arg-44, Arg-69, Asp-87, Asp-113, and Ala-114 each coordinate S-adenosyl-L-methionine. Zn(2+) is bound by residues Cys-244, Cys-247, Cys-261, and Cys-264.

Belongs to the class I-like SAM-binding methyltransferase superfamily. Trm1 family.

The catalysed reaction is guanosine(26) in tRNA + 2 S-adenosyl-L-methionine = N(2)-dimethylguanosine(26) in tRNA + 2 S-adenosyl-L-homocysteine + 2 H(+). Functionally, dimethylates a single guanine residue at position 26 of a number of tRNAs using S-adenosyl-L-methionine as donor of the methyl groups. The protein is tRNA (guanine(26)-N(2))-dimethyltransferase of Metallosphaera sedula (strain ATCC 51363 / DSM 5348 / JCM 9185 / NBRC 15509 / TH2).